Here is a 448-residue protein sequence, read N- to C-terminus: Trigger factor (448 aa).

One can recognise a PPIase FKBP-type domain in the interval 167–253 (GSIVRVDFVE…VKDIKRRDIP (87 aa)).

It belongs to the FKBP-type PPIase family. Tig subfamily.

It localises to the cytoplasm. It catalyses the reaction [protein]-peptidylproline (omega=180) = [protein]-peptidylproline (omega=0). Its function is as follows. Involved in protein export. Acts as a chaperone by maintaining the newly synthesized protein in an open conformation. Functions as a peptidyl-prolyl cis-trans isomerase. The polypeptide is Trigger factor (Borrelia duttonii (strain Ly)).